The sequence spans 317 residues: Transaldolase (317 aa).

Residue K132 is the Schiff-base intermediate with substrate of the active site.

It belongs to the transaldolase family. Type 1 subfamily. As to quaternary structure, homodimer.

Its subcellular location is the cytoplasm. It carries out the reaction D-sedoheptulose 7-phosphate + D-glyceraldehyde 3-phosphate = D-erythrose 4-phosphate + beta-D-fructose 6-phosphate. It participates in carbohydrate degradation; pentose phosphate pathway; D-glyceraldehyde 3-phosphate and beta-D-fructose 6-phosphate from D-ribose 5-phosphate and D-xylulose 5-phosphate (non-oxidative stage): step 2/3. Transaldolase is important for the balance of metabolites in the pentose-phosphate pathway. This Shewanella amazonensis (strain ATCC BAA-1098 / SB2B) protein is Transaldolase.